Consider the following 445-residue polypeptide: Phosphoglucosamine mutase (445 aa).

Residue S102 is the Phosphoserine intermediate of the active site. The Mg(2+) site is built by S102, D241, D243, and D245. A Phosphoserine modification is found at S102.

Belongs to the phosphohexose mutase family. Mg(2+) is required as a cofactor. Post-translationally, activated by phosphorylation.

The catalysed reaction is alpha-D-glucosamine 1-phosphate = D-glucosamine 6-phosphate. Its function is as follows. Catalyzes the conversion of glucosamine-6-phosphate to glucosamine-1-phosphate. The protein is Phosphoglucosamine mutase of Acinetobacter baumannii (strain ACICU).